Reading from the N-terminus, the 232-residue chain is Phosphoglycolate phosphatase (232 aa).

Asp-8 acts as the Nucleophile in catalysis. Residues Asp-8 and Asp-10 each contribute to the Mg(2+) site. Lys-156 provides a ligand contact to substrate. Residues Asp-179 and Asp-183 each coordinate Mg(2+).

This sequence belongs to the archaeal SPP-like hydrolase family. Mg(2+) serves as cofactor.

The enzyme catalyses 2-phosphoglycolate + H2O = glycolate + phosphate. Functionally, catalyzes the dephosphorylation of 2-phosphoglycolate. In Methanopyrus kandleri (strain AV19 / DSM 6324 / JCM 9639 / NBRC 100938), this protein is Phosphoglycolate phosphatase.